Consider the following 548-residue polypeptide: MFS-type transporter TOXA (548 aa).

Over residues 1–12 the composition is skewed to polar residues; the sequence is MDEQIVSASSNV. Residues 1–33 are disordered; the sequence is MDEQIVSASSNVKDGVEKQPVKDREDVDANVVP. Over residues 14-27 the composition is skewed to basic and acidic residues; sequence DGVEKQPVKDREDV. The next 14 membrane-spanning stretches (helical) occupy residues 43–63, 85–105, 114–134, 146–166, 177–197, 204–224, 250–270, 280–300, 316–336, 357–377, 382–402, 411–431, 444–464, and 518–538; these read ISLI…FLGA, AVAW…PLFG, KWLF…CALA, VAGI…ALIV, MIGA…GAIA, WCFW…LFFF, IGAG…QWGG, VVAL…HQYW, GFLL…AALY, MLPI…TISF, APFI…LYTF, IIGY…QAFI, YASA…LCVC, and FLVA…LSWA.

It belongs to the major facilitator superfamily. TCR/Tet family.

It is found in the membrane. MFS-type transporter; part of the diffuse TOX2 gene cluster that mediates the biosynthesis of the HC-toxin, cyclic tetrapeptide of structure cyclo(D-Pro-L-Ala-D-Ala-L-Aeo), where Aeo stands for 2-amino-9,10-epoxi-8-oxodecanoic acid. HC-toxin is a determinant of specificity and virulence in the interaction between the producing fungus and its host, maize. TOXA acts as a HC-toxin efflux pump which contributes to self-protection against HC-toxin and/or the secretion of HC-toxin into the extracellular milieu. In Cochliobolus carbonum (Maize leaf spot fungus), this protein is MFS-type transporter TOXA.